The primary structure comprises 365 residues: G-protein coupled receptor 4 (365 aa).

Over 1-10 (MDNSTGTWEG) the chain is Extracellular. Asn3 is a glycosylation site (N-linked (GlcNAc...) asparagine). The helical transmembrane segment at 11–47 (CHVDSRVDHLFPPSLYIFVIGVGLPTNCLALWAAYRQ) threads the bilayer. Intrachain disulfides connect Cys11–Cys260 and Cys92–Cys170. Residues 48–51 (VRQR) lie on the Cytoplasmic side of the membrane. The chain crosses the membrane as a helical span at residues 52–82 (NELGVYLMNLSIADLLYICTLPLWVDYFLHH). The Extracellular segment spans residues 83-87 (DNWIH). A helical transmembrane segment spans residues 88-123 (GPGSCKLFGFIFYSNIYISIAFLCCISVDRYLAVAH). The Cytoplasmic segment spans residues 124 to 131 (PLRFARLR). The helical transmembrane segment at 132–158 (RVKTAVAVSSVVWATELGANSAPLFHD) threads the bilayer. At 159-174 (ELFRDRYNHTFCFEKF) the chain is on the extracellular side. The segment at 159-174 (ELFRDRYNHTFCFEKF) is extracellular loop 2 (ECL2). An N-linked (GlcNAc...) asparagine glycan is attached at Asn166. A helical membrane pass occupies residues 175 to 212 (PMERWVAWMNLYRVFVGFLFPWALMLLCYRGILRAVQS). At 213-216 (SVST) the chain is on the cytoplasmic side. A helical transmembrane segment spans residues 217–252 (ERQEKVKIKRLALSLIAIVLVCFAPYHALLLSRSAV). Residues 253 to 262 (YLGRPWDCGF) are Extracellular-facing. Residues 263–291 (EERVFSAYHSSLAFTSLNCVADPILYCLV) form a helical membrane-spanning segment. Residues 292–365 (NEGARSDVAK…PLKVLLPPAQ (74 aa)) lie on the Cytoplasmic side of the membrane.

The protein belongs to the G-protein coupled receptor 1 family.

Its subcellular location is the cell membrane. Its activity is regulated as follows. Activated by a network of residues that connects an extracellular-facing cavity to Glu-147, a conserved charged residue buried in the transmembrane core of the receptor. Protonation likely drives conformational changes in extracellular loop 2 (ECL2), which stabilizes movement of transmembrane 3 (TM3) and a series of rearrangements that connect the extracellular-facing cavity to Glu-147, a residue only conserved in proton-sensing G-protein coupled receptors. Functionally, proton-sensing G-protein coupled receptor activated by extracellular pH, which is required to monitor pH changes and generate adaptive reactions. Activated by an optimal pH of 6.8-7.2. Ligand binding causes a conformation change that triggers signaling via guanine nucleotide-binding proteins (G proteins) and modulates the activity of downstream effectors, such as adenylate cyclase. GPR4 is mainly coupled to G(s) G proteins and mediates activation of adenylate cyclase activity. May also couple with G(q) and G(12)/G(13) G proteins. Acts as a key regulator of respiratory sensitivity to CO2/H(+) in brain retrotrapezoid nucleus neurons: acts by mediating detection of protons generated by the formation of carbonic acid in the blood, an important mechanism to impulse to breathe. Also acts as a regulator of acid secretion in the kidney collecting duct by maintaining acid-base homeostasis in the kidney. Acidosis-induced GPR4 activation increases paracellular gap formation and permeability of vascular endothelial cells, possibly through the G(12)/G(13)/Rho GTPase signaling pathway. The protein is G-protein coupled receptor 4 of Rattus norvegicus (Rat).